Consider the following 388-residue polypeptide: Carbamoyl phosphate synthase small chain (388 aa).

The tract at residues 1-194 is CPSase; it reads MAQNPLSKPT…WPEGYARQEA (194 aa). Residues Ser53, Gly246, and Gly248 each contribute to the L-glutamine site. The 190-residue stretch at 198–387 folds into the Glutamine amidotransferase type-1 domain; that stretch reads KVVAIDYGAK…AAAMDAQKAE (190 aa). Residue Cys276 is the Nucleophile of the active site. Residues Leu277, Gln280, Asn318, Gly320, and Phe321 each contribute to the L-glutamine site. Catalysis depends on residues His360 and Glu362.

It belongs to the CarA family. As to quaternary structure, composed of two chains; the small (or glutamine) chain promotes the hydrolysis of glutamine to ammonia, which is used by the large (or ammonia) chain to synthesize carbamoyl phosphate. Tetramer of heterodimers (alpha,beta)4.

The catalysed reaction is hydrogencarbonate + L-glutamine + 2 ATP + H2O = carbamoyl phosphate + L-glutamate + 2 ADP + phosphate + 2 H(+). It carries out the reaction L-glutamine + H2O = L-glutamate + NH4(+). It functions in the pathway amino-acid biosynthesis; L-arginine biosynthesis; carbamoyl phosphate from bicarbonate: step 1/1. Its pathway is pyrimidine metabolism; UMP biosynthesis via de novo pathway; (S)-dihydroorotate from bicarbonate: step 1/3. Small subunit of the glutamine-dependent carbamoyl phosphate synthetase (CPSase). CPSase catalyzes the formation of carbamoyl phosphate from the ammonia moiety of glutamine, carbonate, and phosphate donated by ATP, constituting the first step of 2 biosynthetic pathways, one leading to arginine and/or urea and the other to pyrimidine nucleotides. The small subunit (glutamine amidotransferase) binds and cleaves glutamine to supply the large subunit with the substrate ammonia. The polypeptide is Carbamoyl phosphate synthase small chain (Ruegeria pomeroyi (strain ATCC 700808 / DSM 15171 / DSS-3) (Silicibacter pomeroyi)).